We begin with the raw amino-acid sequence, 233 residues long: MADS-box transcription factor 20 (233 aa).

One can recognise an MADS-box domain in the interval 1–61; sequence MGRGKVQVRR…GNLFHYASSH (61 aa). In terms of domain architecture, K-box spans 91–184; the sequence is EGSMSYDHIK…PTKAAAPPAC (94 aa).

As to expression, expressed in developing seeds and seedling shoots.

It is found in the nucleus. Probable transcription factor. The polypeptide is MADS-box transcription factor 20 (MADS20) (Oryza sativa subsp. japonica (Rice)).